The sequence spans 547 residues: MAAKDVKFDTDARDRMLRGVNILADAVKVTLGPKGRNVVIDKSFGAPRITKDGVSVAKEIELSDKFENMGAQMVKEVASRTNDEAGDGTTTATVLAQAIIKEGLKAVAAGMNPMDLKRGIDLATSKVVEAIKAAARPVNDSHEVAQVGTISANGEAQIGRFIADAMQKVGNEGVITVEENKGLETEVEVVEGMQFDRGYLSPYFVTNADKMTAELDDVYILLHEKKLSSLQPMVPLLEAVIQSQKPLLIIAEDVEGEALATLVVNKLRGGLKIAAVKAPGFGDRRKAMLQDIAILTGGQVISEDLGMKLENVTIDMLGRAKKISINKDNTTIVDGNGDKAEIDARVAQIRNQIEETSSDYDREKLQERVAKLAGGVAVIRVGGMTEVEVKERKDRVDDALNATRAAVQEGIVVGGGVALIQGGKALDGLTGENPDQNAGITIVRRALEAPLRQIAQNAGVDGSVVAGKVRESNEKSFGFNAQTEEYGDMFKFGVIDPAKVVRTALEDAASVASLLITTEAMIADKPEPKSPAGGPGMGGMGGMDGMM.

Residues 30–33, Lys51, 87–91, Gly415, and Asp496 contribute to the ATP site; these read TLGP and DGTTT. The disordered stretch occupies residues 525–547; that stretch reads KPEPKSPAGGPGMGGMGGMDGMM. A compositionally biased stretch (gly residues) spans 533–547; it reads GGPGMGGMGGMDGMM.

This sequence belongs to the chaperonin (HSP60) family. In terms of assembly, forms a cylinder of 14 subunits composed of two heptameric rings stacked back-to-back. Interacts with the co-chaperonin GroES.

The protein localises to the cytoplasm. The catalysed reaction is ATP + H2O + a folded polypeptide = ADP + phosphate + an unfolded polypeptide.. Its function is as follows. Together with its co-chaperonin GroES, plays an essential role in assisting protein folding. The GroEL-GroES system forms a nano-cage that allows encapsulation of the non-native substrate proteins and provides a physical environment optimized to promote and accelerate protein folding. The protein is Chaperonin GroEL 1 of Cereibacter sphaeroides (strain ATCC 17023 / DSM 158 / JCM 6121 / CCUG 31486 / LMG 2827 / NBRC 12203 / NCIMB 8253 / ATH 2.4.1.) (Rhodobacter sphaeroides).